The chain runs to 507 residues: MVKIRPDEISSIIRKQIEDYSQEIKVVNVGTVLQVGDGIARIYGLDKVMAGELVEFEDNSIGIALNLESDNVGVVLMGDGLTIQEGSSVKATGKIAQIPVSDGYLGRVVNALAQPIDGKGQIPASEFRLIESSAPGIISRRSVYEPMQTGLIAIDSMIPIGRGQRELIIGDRQTGKTAVATDTILNQKGQNVICVYVAIGQKASSVAQVVNTFEERGALEYTIVVAEAANSPATLQYLAPYTGAALAEYFMYRKQHTLIIYDDLSKQAQAYRQMSLLLRRPPGREAYPGDVFYLHSRLLERAAKLSSQLGEGSMTALPIVETQAGDVSAYIPTNVISITDGQIFLSADLFNAGIRPAINVGISVSRVGSAAQIKAMKQVAGKLKLELAQFAELEAFAQFASDLDKATQNQLARGQRLRELLKQSQSSPLAVEEQVATIYTGVNGYLDVLEVDQVKKFLVQLREYLTTNKPQFAEIIRSTKVFTEQAEGILKEAIKEHTELFLLQEDK.

170 to 177 (GDRQTGKT) contributes to the ATP binding site.

This sequence belongs to the ATPase alpha/beta chains family. F-type ATPases have 2 components, CF(1) - the catalytic core - and CF(0) - the membrane proton channel. CF(1) has five subunits: alpha(3), beta(3), gamma(1), delta(1), epsilon(1). CF(0) has four main subunits: a, b, b' and c.

It is found in the plastid. The protein localises to the chloroplast thylakoid membrane. The enzyme catalyses ATP + H2O + 4 H(+)(in) = ADP + phosphate + 5 H(+)(out). In terms of biological role, produces ATP from ADP in the presence of a proton gradient across the membrane. The alpha chain is a regulatory subunit. This chain is ATP synthase subunit alpha, chloroplastic, found in Physcomitrium patens (Spreading-leaved earth moss).